The sequence spans 311 residues: Aspartate carbamoyltransferase catalytic subunit (311 aa).

The carbamoyl phosphate site is built by R59 and T60. An L-aspartate-binding site is contributed by K87. Residues R109, H139, and Q142 each coordinate carbamoyl phosphate. 2 residues coordinate L-aspartate: R172 and R224. Carbamoyl phosphate contacts are provided by A265 and P266.

It belongs to the aspartate/ornithine carbamoyltransferase superfamily. ATCase family. As to quaternary structure, heterododecamer (2C3:3R2) of six catalytic PyrB chains organized as two trimers (C3), and six regulatory PyrI chains organized as three dimers (R2).

The catalysed reaction is carbamoyl phosphate + L-aspartate = N-carbamoyl-L-aspartate + phosphate + H(+). It functions in the pathway pyrimidine metabolism; UMP biosynthesis via de novo pathway; (S)-dihydroorotate from bicarbonate: step 2/3. In terms of biological role, catalyzes the condensation of carbamoyl phosphate and aspartate to form carbamoyl aspartate and inorganic phosphate, the committed step in the de novo pyrimidine nucleotide biosynthesis pathway. This is Aspartate carbamoyltransferase catalytic subunit from Streptococcus pyogenes serotype M18 (strain MGAS8232).